Consider the following 660-residue polypeptide: CXXC-type zinc finger protein 1 (660 aa).

Residue Met1 is modified to N-acetylmethionine. Over residues 1–14 the composition is skewed to acidic residues; sequence MEGDGSDLEPPDAG. Residues 1–20 form a disordered region; it reads MEGDGSDLEPPDAGDDSKSE. Phosphoserine occurs at positions 6 and 19. The segment at 28 to 76 adopts a PHD-type zinc-finger fold; the sequence is YCICRKPDINCFMIGCDNCNEWFHGDCIRITEKMAKAIREWYCRECREK. Residues 91–120 show a composition bias toward basic and acidic residues; that stretch reads ERDGSERAGSEPRDEGGGRKRPASDPELQR. Positions 91–166 are disordered; the sequence is ERDGSERAGS…QQQQQQQQQI (76 aa). A Phosphoserine modification is found at Ser124. Residues 164–213 form a CXXC-type zinc finger; that stretch reads QQIKRSARMCGECEACRRTEDCGHCDFCRDMKKFGGPNKIRQKCRLRQCQ. Residues Cys173, Cys176, Cys179, Cys185, Cys188, Cys191, Cys207, and Cys212 each coordinate Zn(2+). Disordered regions lie at residues 223-287 and 328-375; these read FPSS…SDED and AVKV…DPAS. Ser228 carries the phosphoserine modification. Thr231 carries the phosphothreonine modification. Lys254 participates in a covalent cross-link: Glycyl lysine isopeptide (Lys-Gly) (interchain with G-Cter in SUMO2). Residues 328–338 show a composition bias toward basic residues; it reads AVKVKHVKRRE. Residues 339-349 show a composition bias toward basic and acidic residues; it reads KKSEKKKEERY. Positions 350–362 are enriched in basic residues; it reads KRHRQKQKHKDKW. Residues 363–372 are compositionally biased toward basic and acidic residues; that stretch reads KHPERADAKD. Positions 426 to 479 form a coiled coil; it reads AEEHGKKLLERIRREQQSARTRLQEMERRFHELEAIILRAKQQAVREDEENNEN.

As to quaternary structure, component of the SET1 complex, at least composed of the catalytic subunit (SETD1A or SETD1B), WDR5, WDR82, RBBP5, ASH2L/ASH2, CXXC1/CFP1, HCFC1 and DPY30. Interacts with SETD1A. Interacts with ZNF335. Interacts with PRDM9; this interaction does not link PRDM9-activated recombination hotspot sites with DSB machinery and is not required for the hotspot recognition pathway. Interacts with histone H3K4me3. Expressed in seminiferous tubules and in both germ cells and Sertoli cells. Highly expressed in spermatogonia, weakly expressed in leptonema and zygonema, and then again high expression in pachynema and diplonema, decreasing to undetectable levels in spermatids.

It localises to the nucleus speckle. The protein resides in the nucleus. In terms of biological role, transcriptional activator that exhibits a unique DNA binding specificity for CpG unmethylated motifs with a preference for CpGG. This chain is CXXC-type zinc finger protein 1 (Cxxc1), found in Mus musculus (Mouse).